Consider the following 467-residue polypeptide: Glutamate--tRNA ligase (467 aa).

Residues 10–20 carry the 'HIGH' region motif; sequence PSPTGYLHVGG. The 'KMSKS' region signature appears at 238-242; it reads RLSKR. K241 provides a ligand contact to ATP.

Belongs to the class-I aminoacyl-tRNA synthetase family. Glutamate--tRNA ligase type 1 subfamily. In terms of assembly, monomer.

The protein resides in the cytoplasm. It carries out the reaction tRNA(Glu) + L-glutamate + ATP = L-glutamyl-tRNA(Glu) + AMP + diphosphate. Catalyzes the attachment of glutamate to tRNA(Glu) in a two-step reaction: glutamate is first activated by ATP to form Glu-AMP and then transferred to the acceptor end of tRNA(Glu). The polypeptide is Glutamate--tRNA ligase (Citrifermentans bemidjiense (strain ATCC BAA-1014 / DSM 16622 / JCM 12645 / Bem) (Geobacter bemidjiensis)).